We begin with the raw amino-acid sequence, 155 residues long: Ribosomal RNA large subunit methyltransferase H (155 aa).

Residues Gly104 and 123-128 (LGPMTF) each bind S-adenosyl-L-methionine.

It belongs to the RNA methyltransferase RlmH family. In terms of assembly, homodimer.

It is found in the cytoplasm. It carries out the reaction pseudouridine(1915) in 23S rRNA + S-adenosyl-L-methionine = N(3)-methylpseudouridine(1915) in 23S rRNA + S-adenosyl-L-homocysteine + H(+). Its function is as follows. Specifically methylates the pseudouridine at position 1915 (m3Psi1915) in 23S rRNA. The polypeptide is Ribosomal RNA large subunit methyltransferase H (Nitratidesulfovibrio vulgaris (strain DSM 19637 / Miyazaki F) (Desulfovibrio vulgaris)).